Reading from the N-terminus, the 267-residue chain is Undecaprenyl-diphosphatase (267 aa).

The next 7 membrane-spanning stretches (helical) occupy residues 1–21, 40–60, 85–105, 112–132, 188–208, 219–239, and 245–265; these read MPLLQLILVALIQGVTEFLPV, GQAIDVAVHVGTLAAVVLFFW, LALGLIVATIPTVIFGTFLYF, LRSVAVIGWTMLVFGVVLYIA, IAMLMSIPTIIASGVLLGTEV, DMGIAALLAMASALAALALMM, and VSFTPYVIYRVALGMVLLFIA.

This sequence belongs to the UppP family.

The protein resides in the cell inner membrane. It carries out the reaction di-trans,octa-cis-undecaprenyl diphosphate + H2O = di-trans,octa-cis-undecaprenyl phosphate + phosphate + H(+). In terms of biological role, catalyzes the dephosphorylation of undecaprenyl diphosphate (UPP). Confers resistance to bacitracin. The sequence is that of Undecaprenyl-diphosphatase from Ruegeria sp. (strain TM1040) (Silicibacter sp.).